Here is a 246-residue protein sequence, read N- to C-terminus: Probable septum site-determining protein MinC (246 aa).

It belongs to the MinC family. In terms of assembly, interacts with MinD and FtsZ.

Functionally, cell division inhibitor that blocks the formation of polar Z ring septums. Rapidly oscillates between the poles of the cell to destabilize FtsZ filaments that have formed before they mature into polar Z rings. Prevents FtsZ polymerization. This chain is Probable septum site-determining protein MinC, found in Lachnospira eligens (strain ATCC 27750 / DSM 3376 / VPI C15-48 / C15-B4) (Eubacterium eligens).